Reading from the N-terminus, the 79-residue chain is Small ribosomal subunit protein bS16 (79 aa).

It belongs to the bacterial ribosomal protein bS16 family.

This is Small ribosomal subunit protein bS16 from Solidesulfovibrio magneticus (strain ATCC 700980 / DSM 13731 / RS-1) (Desulfovibrio magneticus).